The sequence spans 95 residues: Aspartyl/glutamyl-tRNA(Asn/Gln) amidotransferase subunit C (95 aa).

The protein belongs to the GatC family. In terms of assembly, heterotrimer of A, B and C subunits.

The catalysed reaction is L-glutamyl-tRNA(Gln) + L-glutamine + ATP + H2O = L-glutaminyl-tRNA(Gln) + L-glutamate + ADP + phosphate + H(+). It carries out the reaction L-aspartyl-tRNA(Asn) + L-glutamine + ATP + H2O = L-asparaginyl-tRNA(Asn) + L-glutamate + ADP + phosphate + 2 H(+). In terms of biological role, allows the formation of correctly charged Asn-tRNA(Asn) or Gln-tRNA(Gln) through the transamidation of misacylated Asp-tRNA(Asn) or Glu-tRNA(Gln) in organisms which lack either or both of asparaginyl-tRNA or glutaminyl-tRNA synthetases. The reaction takes place in the presence of glutamine and ATP through an activated phospho-Asp-tRNA(Asn) or phospho-Glu-tRNA(Gln). The chain is Aspartyl/glutamyl-tRNA(Asn/Gln) amidotransferase subunit C from Chlorobium phaeovibrioides (strain DSM 265 / 1930) (Prosthecochloris vibrioformis (strain DSM 265)).